The following is a 142-amino-acid chain: Small heat shock protein IbpB (142 aa).

The region spanning 26–137 (SGESQSFPPY…PPQRIAINER (112 aa)) is the sHSP domain.

Belongs to the small heat shock protein (HSP20) family. In terms of assembly, homodimer. Forms homomultimers of about 100-150 subunits at optimal growth temperatures. Conformation changes to oligomers at high temperatures or high ionic concentrations. The decrease in size of the multimers is accompanied by an increase in chaperone activity.

The protein localises to the cytoplasm. Its function is as follows. Associates with aggregated proteins, together with IbpA, to stabilize and protect them from irreversible denaturation and extensive proteolysis during heat shock and oxidative stress. Aggregated proteins bound to the IbpAB complex are more efficiently refolded and reactivated by the ATP-dependent chaperone systems ClpB and DnaK/DnaJ/GrpE. Its activity is ATP-independent. The polypeptide is Small heat shock protein IbpB (Salmonella typhi).